The following is a 150-amino-acid chain: Putative pre-16S rRNA nuclease (150 aa).

Belongs to the YqgF nuclease family.

It is found in the cytoplasm. In terms of biological role, could be a nuclease involved in processing of the 5'-end of pre-16S rRNA. The polypeptide is Putative pre-16S rRNA nuclease (Protochlamydia amoebophila (strain UWE25)).